A 251-amino-acid polypeptide reads, in one-letter code: Hydroxyacylglutathione hydrolase (251 aa).

Zn(2+) contacts are provided by H53, H55, D57, H58, H110, D127, and H165.

This sequence belongs to the metallo-beta-lactamase superfamily. Glyoxalase II family. Monomer. It depends on Zn(2+) as a cofactor.

The enzyme catalyses an S-(2-hydroxyacyl)glutathione + H2O = a 2-hydroxy carboxylate + glutathione + H(+). The protein operates within secondary metabolite metabolism; methylglyoxal degradation; (R)-lactate from methylglyoxal: step 2/2. In terms of biological role, thiolesterase that catalyzes the hydrolysis of S-D-lactoyl-glutathione to form glutathione and D-lactic acid. This is Hydroxyacylglutathione hydrolase from Erwinia tasmaniensis (strain DSM 17950 / CFBP 7177 / CIP 109463 / NCPPB 4357 / Et1/99).